The sequence spans 2486 residues: Nonribosomal peptide synthetase nanA (2486 aa).

The interval 231–637 is adenylation 1; the sequence is FSARQPLSPA…GRRGTQVKLR (407 aa). The region spanning 786 to 860 is the Carrier 1 domain; sequence TDIELKVHAL…DLARSAKETS (75 aa). An O-(pantetheine 4'-phosphoryl)serine modification is found at S820. The interval 902–1314 is condensation 1; that stretch reads EDAYPCTPLQ…LKSVPRVSSQ (413 aa). Residues 1339 to 1735 are adenylation 2; that stretch reads RAQARKTPLA…GRIGDQMKIR (397 aa). Carrier domains lie at 1872–1948 and 2404–2480; these read PPST…SSAS and SSSE…QTQA. O-(pantetheine 4'-phosphoryl)serine occurs at positions 1909 and 2441. Positions 2404 to 2480 are condensation 2; the sequence is SSSETIVEPL…KLARLLQTQA (77 aa).

Belongs to the NRP synthetase family.

It functions in the pathway secondary metabolite biosynthesis. Its function is as follows. Nonribosomal peptide synthetase; part of the gene cluster that mediates the biosynthesis of the benzazepine alkaloid nanangelenin A which contains an unprecedented 3,4-dihydro-1-benzazepine-2,5-dione-N-prenyl-N-acetoxy-anthranilamide scaffold. The first step of nanangelenin biosynthesis is catalyzed by the indoleamine 2,3-dioxygenase nanC which produces N-formyl-kynurenine through the catabolism of tryptophan. The two-module NRPS nanA then utilizes anthranilate (Ant) and L-kynurenine (L-Kyn) to assemble the dipeptide product nanangelenin B. The first adenylation domain of nanA (A1) loads anthranilate onto the T1 domain, while A2 loads kynurenine, generated through spontaneous nonenzymatic deformylation of the nanC-supplied N-formyl-kynurenine. The peptide bond formation between the tethered amino acids is catalyzed by the first condensation domain (C1) between anthranilate's carbonyl carbon and kynurenine's aliphatic primary amine. The second C domain (C2) catalyzes the final cyclization event between the aromatic amine of kynurenine and the tethered carbonyl carbon, yielding nanangelenin B. The terminal T3 domain enhances the catalytic efficiency of C2, suggesting the T2-tethered Ant-L-Kyn is transferred to T3 prior to cyclization by C2. Once released from nanA, nanangelenin B is then prenylated by the prenyltransferase nanD to form nanangelenin C. Nanangelenin C is then N-hydroxylated by the FAD-dependent monooxygenase nanF and further acetylated by the acetyltransferase nanB to yield nanangelenin F. Finally, the N-methyltransferase nanE methylates the amide nitrogen of 1-benzazepine to convert nanangelenin F into nanangelenin A. NanE is also able to methylate most of the intermediates of the pathway such as nanangelenin B and nanangelenin C to produce nanangelenin D and nanangelenin E, respectively. This chain is Nonribosomal peptide synthetase nanA, found in Aspergillus nanangensis.